The following is a 191-amino-acid chain: Glutathione-dependent formaldehyde-activating enzyme (191 aa).

In terms of domain architecture, CENP-V/GFA spans 22–169; it reads FQGGTLECHC…LTELGLPPYD (148 aa). Zn(2+) is bound by residues Cys29, Cys31, Cys50, Cys52, Cys55, Cys97, and Cys100.

The protein belongs to the Gfa family. The cofactor is Zn(2+).

It carries out the reaction S-(hydroxymethyl)glutathione = glutathione + formaldehyde. Its pathway is one-carbon metabolism; formaldehyde degradation; formate from formaldehyde (glutathione route): step 1/3. Functionally, catalyzes the condensation of formaldehyde and glutathione to S-hydroxymethylglutathione. The protein is Glutathione-dependent formaldehyde-activating enzyme of Xanthomonas axonopodis pv. citri (strain 306).